The primary structure comprises 309 residues: Homoserine O-acetyltransferase (309 aa).

The Acyl-thioester intermediate role is filled by Cys142. The substrate site is built by Lys163 and Ser192. Residue His235 is the Proton acceptor of the active site. Residue Glu237 is part of the active site. Arg249 lines the substrate pocket.

The protein belongs to the MetA family.

It is found in the cytoplasm. The enzyme catalyses L-homoserine + acetyl-CoA = O-acetyl-L-homoserine + CoA. It functions in the pathway amino-acid biosynthesis; L-methionine biosynthesis via de novo pathway; O-acetyl-L-homoserine from L-homoserine: step 1/1. Transfers an acetyl group from acetyl-CoA to L-homoserine, forming acetyl-L-homoserine. The chain is Homoserine O-acetyltransferase from Petrotoga mobilis (strain DSM 10674 / SJ95).